The sequence spans 255 residues: Imidazole glycerol phosphate synthase subunit HisF (255 aa).

Active-site residues include Asp-11 and Asp-130.

Belongs to the HisA/HisF family. As to quaternary structure, heterodimer of HisH and HisF.

The protein localises to the cytoplasm. It catalyses the reaction 5-[(5-phospho-1-deoxy-D-ribulos-1-ylimino)methylamino]-1-(5-phospho-beta-D-ribosyl)imidazole-4-carboxamide + L-glutamine = D-erythro-1-(imidazol-4-yl)glycerol 3-phosphate + 5-amino-1-(5-phospho-beta-D-ribosyl)imidazole-4-carboxamide + L-glutamate + H(+). The protein operates within amino-acid biosynthesis; L-histidine biosynthesis; L-histidine from 5-phospho-alpha-D-ribose 1-diphosphate: step 5/9. Functionally, IGPS catalyzes the conversion of PRFAR and glutamine to IGP, AICAR and glutamate. The HisF subunit catalyzes the cyclization activity that produces IGP and AICAR from PRFAR using the ammonia provided by the HisH subunit. The protein is Imidazole glycerol phosphate synthase subunit HisF of Rhodopseudomonas palustris (strain BisA53).